A 2208-amino-acid polypeptide reads, in one-letter code: Glutamate synthase 1 [NADH], chloroplastic (2208 aa).

The N-terminal 49 residues, 1-49, are a transit peptide targeting the chloroplast; sequence MSAASSSSVLHLRTNQQLLSLRSLKNSTSVASQLAVTSGVSRRRSCTAR. The active-site Nucleophile is Cys-117. Residues 117–521 enclose the Glutamine amidotransferase type-2 domain; the sequence is CGVGFVAELS…PGMMLLVDFE (405 aa). A disordered region spans residues 1040–1067; sequence GKSNTGEGGELPSRMEPLADGSRNPKRS. 1211 to 1268 contacts FMN; the sequence is LAETHQTLVANDLRGRTVLQTDGQLKTGRDVAVAALLGAEEFGFSTAPLITLGCIMMR. Residues Cys-1264, Cys-1270, and Cys-1275 each coordinate [3Fe-4S] cluster. An NAD(+)-binding site is contributed by 1995–2009; it reads GGGDTGTDCIGTSIR.

Belongs to the glutamate synthase family. Monomer. Requires [3Fe-4S] cluster as cofactor. It depends on FAD as a cofactor. FMN is required as a cofactor. Highly expressed in roots and at low levels in leaves.

The protein localises to the plastid. Its subcellular location is the chloroplast. It catalyses the reaction 2 L-glutamate + NAD(+) = L-glutamine + 2-oxoglutarate + NADH + H(+). The protein operates within amino-acid biosynthesis; L-glutamate biosynthesis via GLT pathway; L-glutamate from 2-oxoglutarate and L-glutamine (NAD(+) route): step 1/1. It participates in energy metabolism; nitrogen metabolism. Its function is as follows. Involved in glutamate biosynthesis. Required for non-photorespiratory ammonium assimilation. Probably involved in primary ammonium assimilation in roots. This chain is Glutamate synthase 1 [NADH], chloroplastic (GLT1), found in Arabidopsis thaliana (Mouse-ear cress).